Here is a 366-residue protein sequence, read N- to C-terminus: A-type ATP synthase subunit C (366 aa).

It belongs to the V-ATPase V0D/AC39 subunit family. In terms of assembly, has multiple subunits with at least A(3), B(3), C, D, E, F, H, I and proteolipid K(x).

Its subcellular location is the cell membrane. In terms of biological role, component of the A-type ATP synthase that produces ATP from ADP in the presence of a proton gradient across the membrane. In Thermococcus onnurineus (strain NA1), this protein is A-type ATP synthase subunit C.